A 479-amino-acid polypeptide reads, in one-letter code: MNRMRWVGEGDIWDLDMSTPVTLEGTARAVPDDPLPLGLSRGTRLSRPKQVEFFHRFMASPLIPSFSPIRPNTGDGGGGGFSLQRVLTLPFSNNWLVSLLGQFDVQRFVTEIDKTKAFGRGSSSTVASRLNTIGKHLKDKSLYALGFCSEFLLSPDDTLLLSYDAYKGDLDKNPRAKAIFNHEFPLHNLTAEAVWPGLFVDKHGEYWDVPLSMAIDLASLPAESGPSYHLCLHHNSGSPKKLHSDTMEVPPPSLLPGLSLKSAVSYRTNMDLWRGTTPKLETCKPYDVFLSSPHVAVSGIIGSVMTAAFGENSIRSKFENDSEGVGGFSLHFPSVNSGFMADALGRASLTAQYGNFQKFFFDLTRFHARLDFPHGLRFLTGATSVAQDLLNSRQPSLEAFQKICPEVLVSLQQQIVGPFSFKVESGIEIDLRNGANPVTVDKTVFAIEYALQVLLSAKAVVSYSPKQNEFMVELRFFET.

The hydrophobic stretch at 288-310 threads the membrane; it reads VFLSSPHVAVSGIIGSVMTAAFG.

Homodimer. Forms dimeric beta-barrel. Interacts with TGD5.

The protein resides in the plastid. It is found in the chloroplast outer membrane. The protein localises to the endoplasmic reticulum. Functionally, involved in lipid transfer from the endoplasmic reticulum (ER) to plastids. Specifically binds phosphatidic acid (PtdOH). The chain is Protein TRIGALACTOSYLDIACYLGLYCEROL 4, chloroplastic from Arabidopsis thaliana (Mouse-ear cress).